We begin with the raw amino-acid sequence, 190 residues long: Threonylcarbamoyl-AMP synthase (190 aa).

A YrdC-like domain is found at 7 to 190; that stretch reads IGSIAAAVDL…ALTGELFRQG (184 aa).

This sequence belongs to the SUA5 family. TsaC subfamily.

It is found in the cytoplasm. The catalysed reaction is L-threonine + hydrogencarbonate + ATP = L-threonylcarbamoyladenylate + diphosphate + H2O. Functionally, required for the formation of a threonylcarbamoyl group on adenosine at position 37 (t(6)A37) in tRNAs that read codons beginning with adenine. Catalyzes the conversion of L-threonine, HCO(3)(-)/CO(2) and ATP to give threonylcarbamoyl-AMP (TC-AMP) as the acyladenylate intermediate, with the release of diphosphate. The sequence is that of Threonylcarbamoyl-AMP synthase from Salmonella typhimurium (strain LT2 / SGSC1412 / ATCC 700720).